The chain runs to 1169 residues: Polyamine-transporting ATPase 13A2 (1169 aa).

Over 1–44 (MSADSSLLMGSTPPSYGTLTTGTSIDPLSSSASSVRLSGYCGSP) the chain is Cytoplasmic. The stretch at 45-65 (WRAIGYHAAVWMLAGIPWLLF) is an intramembrane region. At 66-225 (RWKPLWGVRL…ISIPVKSYLQ (160 aa)) the chain is on the cytoplasmic side. A helical membrane pass occupies residues 226-246 (LLADEALNPYYGFQAFSIALW). Residues 247–250 (LADH) are Lumenal-facing. Residues 251 to 271 (YYWYALCIFLISAISICLALY) form a helical membrane-spanning segment. Residues 272–422 (KTRKQSLTLR…SFKFYKHSMK (151 aa)) lie on the Cytoplasmic side of the membrane. A helical membrane pass occupies residues 423-443 (FVAALSVLALLGTVYSIIILY). Residues 444–458 (RNRVPVREIVIRALD) lie on the Lumenal side of the membrane. The helical transmembrane segment at 459 to 479 (LVTVVVPPALPAAMTVCTLYA) threads the bilayer. At 480-919 (QSRLRTQGIF…REGRCSLDTS (440 aa)) the chain is on the cytoplasmic side. The active-site 4-aspartylphosphate intermediate is the aspartate 508. 2 residues coordinate Mg(2+): aspartate 867 and aspartate 871. The chain crosses the membrane as a helical span at residues 920–940 (FSVFKYMALYSLTQFISVLIL). At 941 to 946 (YTINTN) the chain is on the lumenal side. Residues 947–967 (LGDLQFLAIDLVITTTVAVLM) traverse the membrane as a helical segment. The Cytoplasmic segment spans residues 968 to 993 (SRTGPALTLVRARPPGALLSVPVLGS). The chain crosses the membrane as a helical span at residues 994 to 1014 (LLLQVALVAGIQLGGYFLVIA). The Lumenal portion of the chain corresponds to 1015-1037 (QPWFVPLNRTVPAPDNLPNYENT). Asparagine 1022 carries N-linked (GlcNAc...) asparagine glycosylation. Residues 1038-1058 (VVFSLSGFQYLILAAAVSKGA) traverse the membrane as a helical segment. Topologically, residues 1059-1069 (PFRQPLYTNVP) are cytoplasmic. A helical transmembrane segment spans residues 1070 to 1090 (FLVALALLGSVLVGLILVPGL). The Lumenal portion of the chain corresponds to 1091 to 1106 (LQGPLGLRNIVDSSFK). Residues 1107 to 1127 (LLLLGLVAFNFVGAFMLESVL) traverse the membrane as a helical segment. The Cytoplasmic portion of the chain corresponds to 1128–1169 (DQCLPACLRWLRPKRASKKQFKRLQQELAEHPWPTLPVGSVR).

It belongs to the cation transport ATPase (P-type) (TC 3.A.3) family. Type V subfamily. As to quaternary structure, interacts with MYCBP2; the interaction inhibits the ubiquitination of TSC2 by MYCBP2. Interacts with HDAC6; the interaction results in recruitment of HDAC6 to lysosomes to promote CTTN deacetylation. Post-translationally, autophosphorylated. Accumulates in an inactive autophosphorylated state and autophosphorylation is stimulated by phosphatidic acid and phosphatidylinositol 3,5-bisphosphate but not by Mn(2+) or Zn(2+). The presence of spermine results in a dose-dependent reduction in autophosphorylation.

The protein resides in the lysosome membrane. It localises to the late endosome membrane. The protein localises to the endosome. It is found in the multivesicular body membrane. Its subcellular location is the cytoplasmic vesicle. The protein resides in the autophagosome membrane. The catalysed reaction is spermidine(out) + ATP + H2O = spermidine(in) + ADP + phosphate + H(+). It carries out the reaction spermine(out) + ATP + H2O = spermine(in) + ADP + phosphate + H(+). With respect to regulation, accumulates in an inactive autophosphorylated state. The presence of spermine results in a dose-dependent reduction in autophosphorylation. Functionally, ATPase which acts as a lysosomal polyamine exporter with high affinity for spermine. Also stimulates cellular uptake of polyamines and protects against polyamine toxicity. Plays a role in intracellular cation homeostasis and the maintenance of neuronal integrity. Contributes to cellular zinc homeostasis. Confers cellular protection against Mn(2+) and Zn(2+) toxicity and mitochondrial stress. Required for proper lysosomal and mitochondrial maintenance. Regulates the autophagy-lysosome pathway through the control of SYT11 expression at both transcriptional and post-translational levels. Facilitates recruitment of deacetylase HDAC6 to lysosomes to deacetylate CTTN, leading to actin polymerization, promotion of autophagosome-lysosome fusion and completion of autophagy. Promotes secretion of exosomes as well as secretion of SCNA via exosomes. Plays a role in lipid homeostasis. In Mus musculus (Mouse), this protein is Polyamine-transporting ATPase 13A2.